Reading from the N-terminus, the 790-residue chain is E3 ubiquitin-protein ligase Jade-2 (790 aa).

Disordered regions lie at residues 1 to 52 (MEEK…PSEV) and 111 to 130 (GPPA…SQPD). A phosphoserine mark is found at serine 9 and serine 15. A compositionally biased stretch (low complexity) spans 9-28 (SISSDNSDTTDSHATSTSAS). Residues lysine 32 and lysine 38 each carry the N6-acetyllysine modification. At serine 117 the chain carries Phosphoserine. Residues 199–249 (DVVCDVCRSPEGEDGNEMVFCDKCNVCVHQACYGILKVPTGSWLCRTCALG) form a PHD-type 1 zinc finger. A C2HC pre-PHD-type zinc finger spans residues 251-285 (QPKCLLCPKRGGALKPTRSGTKWVHVSCALWIPEV). N6-acetyllysine is present on lysine 298. The PHD-type 2 zinc-finger motif lies at 309-365 (LSCSLCKECTGTCIQCSMPSCVTAFHVTCAFDHGLEMRTILADNDEVKFKSFCQEHS). 2 disordered regions span residues 361 to 386 (CQEH…AGED) and 578 to 777 (SFMR…PREA). Residues 372–381 (EPTSEPTEPS) show a composition bias toward polar residues. The segment covering 593–606 (KARGRTRLPAKKKP) has biased composition (basic residues). Positions 684-693 (AASVAADSDV) are enriched in low complexity. Positions 737-747 (ERPKVSLHFDT) are enriched in basic and acidic residues. Residues 757-767 (EMSDSDVEAED) are compositionally biased toward acidic residues.

The protein belongs to the JADE family. In terms of assembly, component of the HBO1 complex composed at least of ING4 or ING5, MYST2/HBO1, MEAF6, and one of JADE1, JADE2 and JADE3. Interacts (via C-terminus) with KDM1A (via AOD/Tower domain).

It catalyses the reaction S-ubiquitinyl-[E2 ubiquitin-conjugating enzyme]-L-cysteine + [acceptor protein]-L-lysine = [E2 ubiquitin-conjugating enzyme]-L-cysteine + N(6)-ubiquitinyl-[acceptor protein]-L-lysine.. It participates in protein modification; protein ubiquitination. Scaffold subunit of some HBO1 complexes, which have a histone H4 acetyltransferase activity. Acts as an E3 ubiquitin-protein ligase mediating the ubiquitination and subsequent proteasomal degradation of target protein histone demethylase KDM1A. Also acts as a ubiquitin ligase E3 toward itself. Positive regulator of neurogenesis. This is E3 ubiquitin-protein ligase Jade-2 (JADE2) from Homo sapiens (Human).